Here is a 288-residue protein sequence, read N- to C-terminus: NAD(P)H-hydrate epimerase (288 aa).

The N-terminal 32 residues, 1–32 (MSGLRALLGLGLLVAGSRLSRVRVQAGSCRAG), are a transit peptide targeting the mitochondrion. Residue S49 is modified to Phosphoserine. Residues 65-275 (AQAVDQELFN…ALEKKYQLNL (211 aa)) enclose the YjeF N-terminal domain. Residue 119 to 123 (NNGGD) participates in (6S)-NADPHX binding. N120 contributes to the K(+) binding site. Residue K144 is modified to N6-succinyllysine. K(+) is bound at residue D185. (6S)-NADPHX-binding positions include 189–195 (GFSFTGE) and D218. Position 221 (S221) interacts with K(+).

It belongs to the NnrE/AIBP family. As to quaternary structure, homodimer. Interacts with APOA1 and APOA2. K(+) is required as a cofactor. Post-translationally, undergoes physiological phosphorylation during sperm capacitation, downstream to PKA activation.

The protein resides in the mitochondrion. It is found in the secreted. It carries out the reaction (6R)-NADHX = (6S)-NADHX. The catalysed reaction is (6R)-NADPHX = (6S)-NADPHX. Its function is as follows. Catalyzes the epimerization of the S- and R-forms of NAD(P)HX, a damaged form of NAD(P)H that is a result of enzymatic or heat-dependent hydration. This is a prerequisite for the S-specific NAD(P)H-hydrate dehydratase to allow the repair of both epimers of NAD(P)HX. Accelerates cholesterol efflux from endothelial cells to high-density lipoprotein (HDL) and thereby regulates angiogenesis. The polypeptide is NAD(P)H-hydrate epimerase (Bos taurus (Bovine)).